Reading from the N-terminus, the 242-residue chain is 1-(5-phosphoribosyl)-5-[(5-phosphoribosylamino)methylideneamino] imidazole-4-carboxamide isomerase (242 aa).

Catalysis depends on D8, which acts as the Proton acceptor. D129 functions as the Proton donor in the catalytic mechanism.

It belongs to the HisA/HisF family.

Its subcellular location is the cytoplasm. It catalyses the reaction 1-(5-phospho-beta-D-ribosyl)-5-[(5-phospho-beta-D-ribosylamino)methylideneamino]imidazole-4-carboxamide = 5-[(5-phospho-1-deoxy-D-ribulos-1-ylimino)methylamino]-1-(5-phospho-beta-D-ribosyl)imidazole-4-carboxamide. Its pathway is amino-acid biosynthesis; L-histidine biosynthesis; L-histidine from 5-phospho-alpha-D-ribose 1-diphosphate: step 4/9. In Maridesulfovibrio salexigens (strain ATCC 14822 / DSM 2638 / NCIMB 8403 / VKM B-1763) (Desulfovibrio salexigens), this protein is 1-(5-phosphoribosyl)-5-[(5-phosphoribosylamino)methylideneamino] imidazole-4-carboxamide isomerase.